Consider the following 481-residue polypeptide: Zygotic gap protein knirps (481 aa).

Residues N2–Y78 constitute a DNA-binding region (nuclear receptor). 2 NR C4-type zinc fingers span residues C5 to C25 and C42 to C66. 5 stretches are compositionally biased toward low complexity: residues A100–G111, Q127–Q148, T245–P264, S316–S335, and T420–T440. Disordered stretches follow at residues A100–G161, S231–I294, L308–F336, and T420–A442.

This sequence belongs to the nuclear hormone receptor family. NR0 subfamily.

The protein resides in the nucleus. In terms of biological role, transcriptional repressor. Binds to multiple sites in the eve stripe 3 enhancer element. Plays an essential role in the segmentation process both by refining the expression patterns of gap genes and by establishing pair-rules stripes of gene expression. The chain is Zygotic gap protein knirps (kni) from Drosophila virilis (Fruit fly).